A 98-amino-acid chain; its full sequence is NADH-ubiquinone oxidoreductase chain 4L (98 aa).

3 helical membrane passes run 1–21 (MSLV…GLLM), 29–49 (SLLC…IMVL), and 61–81 (IILL…LVMV).

Belongs to the complex I subunit 4L family. As to quaternary structure, core subunit of respiratory chain NADH dehydrogenase (Complex I) which is composed of 45 different subunits.

It is found in the mitochondrion inner membrane. It carries out the reaction a ubiquinone + NADH + 5 H(+)(in) = a ubiquinol + NAD(+) + 4 H(+)(out). In terms of biological role, core subunit of the mitochondrial membrane respiratory chain NADH dehydrogenase (Complex I) which catalyzes electron transfer from NADH through the respiratory chain, using ubiquinone as an electron acceptor. Part of the enzyme membrane arm which is embedded in the lipid bilayer and involved in proton translocation. This Pseudosoriculus fumidus (Taiwanese brown-toothed shrew) protein is NADH-ubiquinone oxidoreductase chain 4L (MT-ND4L).